The sequence spans 143 residues: Large-conductance mechanosensitive channel (143 aa).

The next 2 helical transmembrane spans lie at 10 to 30 (FAVKGNVMDLAIGVIIGGAFS) and 89 to 109 (GSFITVLINFIILAFIIFLMV).

Belongs to the MscL family. In terms of assembly, homopentamer.

The protein localises to the cell inner membrane. Its function is as follows. Channel that opens in response to stretch forces in the membrane lipid bilayer. May participate in the regulation of osmotic pressure changes within the cell. The sequence is that of Large-conductance mechanosensitive channel from Burkholderia pseudomallei (strain 668).